The sequence spans 69 residues: uncharacterized protein (69 aa).

Residues M1–K15 are Cytoplasmic-facing. A helical membrane pass occupies residues L16–Y36. The Extracellular portion of the chain corresponds to M37 to Y69. N-linked (GlcNAc...) asparagine; by host glycosylation occurs at N51.

This sequence belongs to the asfivirus X69R family.

The protein resides in the host membrane. This is an uncharacterized protein from Ornithodoros (relapsing fever ticks).